Reading from the N-terminus, the 278-residue chain is 4-deoxy-L-threo-5-hexosulose-uronate ketol-isomerase (278 aa).

4 residues coordinate Zn(2+): histidine 196, histidine 198, glutamate 203, and histidine 245.

The protein belongs to the KduI family. In terms of assembly, homohexamer. Zn(2+) serves as cofactor.

The enzyme catalyses 5-dehydro-4-deoxy-D-glucuronate = 3-deoxy-D-glycero-2,5-hexodiulosonate. Its pathway is glycan metabolism; pectin degradation; 2-dehydro-3-deoxy-D-gluconate from pectin: step 4/5. Functionally, catalyzes the isomerization of 5-dehydro-4-deoxy-D-glucuronate to 3-deoxy-D-glycero-2,5-hexodiulosonate. The polypeptide is 4-deoxy-L-threo-5-hexosulose-uronate ketol-isomerase (Escherichia coli (strain 55989 / EAEC)).